A 281-amino-acid chain; its full sequence is 33 kDa chaperonin (281 aa).

2 cysteine pairs are disulfide-bonded: cysteine 229-cysteine 231 and cysteine 262-cysteine 265.

This sequence belongs to the HSP33 family. In terms of processing, under oxidizing conditions two disulfide bonds are formed involving the reactive cysteines. Under reducing conditions zinc is bound to the reactive cysteines and the protein is inactive.

Its subcellular location is the cytoplasm. Functionally, redox regulated molecular chaperone. Protects both thermally unfolding and oxidatively damaged proteins from irreversible aggregation. Plays an important role in the bacterial defense system toward oxidative stress. The polypeptide is 33 kDa chaperonin (Pseudoalteromonas translucida (strain TAC 125)).